The following is a 403-amino-acid chain: Leu/Ile/Val-binding protein homolog 8 (403 aa).

A signal peptide spans 1 to 26 (MRLSRLLIGASLGVALSSTAFTAALA).

Belongs to the leucine-binding protein family.

Functionally, component of an amino-acid transport system. This is Leu/Ile/Val-binding protein homolog 8 from Brucella suis biovar 1 (strain 1330).